The chain runs to 396 residues: Succinyl-CoA:mesaconate CoA-transferase (396 aa).

Catalysis depends on Asp175, which acts as the Nucleophile.

This sequence belongs to the CoA-transferase III family. As to quaternary structure, homodimer.

The catalysed reaction is mesaconate + succinyl-CoA = 2-methylfumaryl-CoA + succinate. Its activity is regulated as follows. Shows highest activity at 4 M KCl. Does not require divalent ions for activity. In terms of biological role, involved in the methylaspartate cycle. Catalyzes the transfer of the CoA moiety from succinyl-CoA to mesaconate to generate mesaconyl-CoA (2-methylfumaryl-CoA) and succinate. Also shows high activity with methylsuccinate as CoA-acceptor, and only low activity with glutarate, acrylate and itaconate. Cannot use other CoA donors like acetyl-CoA, propionyl-CoA, butyryl-CoA or acetoacetyl-CoA. In Haloarcula hispanica (strain ATCC 33960 / DSM 4426 / JCM 8911 / NBRC 102182 / NCIMB 2187 / VKM B-1755), this protein is Succinyl-CoA:mesaconate CoA-transferase.